The chain runs to 924 residues: DNA repair and recombination protein RDH54 (924 aa).

A compositionally biased stretch (basic and acidic residues) spans 1 to 10; sequence MQIPKYENKP. Disordered regions lie at residues 1–21 and 155–182; these read MQIP…GSNK and EALS…KNDG. A compositionally biased stretch (low complexity) spans 168–178; sequence TTSTTETVPST. A Helicase ATP-binding domain is found at 299–487; sequence LENDSDISGC…FTIIDFINPG (189 aa). 346-353 serves as a coordination point for ATP; that stretch reads IPLTGLCK. Residues 472-475 carry the DEGH box motif; sequence NDLN. Lys-615 participates in a covalent cross-link: Glycyl lysine isopeptide (Lys-Gly) (interchain with G-Cter in ubiquitin). Residues 631 to 790 form the Helicase C-terminal domain; the sequence is KLRVLMTLLE…DSEMRNKESS (160 aa).

This sequence belongs to the SNF2/RAD54 helicase family. In terms of assembly, interacts with RAD51 and DMC1.

Its subcellular location is the nucleus. The catalysed reaction is ATP + H2O = ADP + phosphate + H(+). Functionally, involved in the recombinational repair of double-strand breaks (DSB) in DNA during mitosis and meiosis. Has DNA dependent ATPase activity. Promotes D-loop (displacement loop) formation with RAD51 recombinase. Modifies the topology of double-stranded DNA during the D-loop reaction to facilitate the invasion of the homologous duplex molecule by the initiating single-stranded DNA substrate. Required for adaptation from G2/M checkpoint arrest induced by a double strand break, by participating in monitoring the extent of single-stranded DNA produced by resection of DNA ends. This role is distinct from its roles in recombination. Promotes colocalization of RAD51 and DMC1 during meiotic recombination. Involved in crossover interference. The sequence is that of DNA repair and recombination protein RDH54 (RDH54) from Saccharomyces cerevisiae (strain AWRI1631) (Baker's yeast).